Here is a 503-residue protein sequence, read N- to C-terminus: Probable DNA double-strand break repair helicase HerA (503 aa).

Residues arginine 122, 131 to 136 (GGGKSN), and 478 to 479 (KI) each bind ATP.

This sequence belongs to the HerA family.

The catalysed reaction is Couples ATP hydrolysis with the unwinding of duplex DNA at the replication fork by translocating in the 5'-3' direction. This creates two antiparallel DNA single strands (ssDNA). The leading ssDNA polymer is the template for DNA polymerase III holoenzyme which synthesizes a continuous strand.. It catalyses the reaction ATP + H2O = ADP + phosphate + H(+). The enzyme catalyses Couples ATP hydrolysis with the unwinding of duplex DNA by translocating in the 3'-5' direction.. In terms of biological role, involved in DNA double-strand break (DSB) repair. Probably acts with NurA to stimulate resection of the 5' strand and produce the long 3' single-strand that is required for RadA loading. Has DNA-dependent ATPase activity and DNA helicase activity. The chain is Probable DNA double-strand break repair helicase HerA from Methanocaldococcus jannaschii (strain ATCC 43067 / DSM 2661 / JAL-1 / JCM 10045 / NBRC 100440) (Methanococcus jannaschii).